We begin with the raw amino-acid sequence, 220 residues long: Ribonuclease HII (220 aa).

An RNase H type-2 domain is found at 32–220 (KHIAGIDEAG…FAPIKGRFDC (189 aa)). Asp38, Glu39, and Asp130 together coordinate a divalent metal cation.

It belongs to the RNase HII family. The cofactor is Mn(2+). Mg(2+) is required as a cofactor.

It localises to the cytoplasm. It catalyses the reaction Endonucleolytic cleavage to 5'-phosphomonoester.. Endonuclease that specifically degrades the RNA of RNA-DNA hybrids. This Brucella ovis (strain ATCC 25840 / 63/290 / NCTC 10512) protein is Ribonuclease HII.